The sequence spans 307 residues: Small ribosomal subunit biogenesis GTPase RsgA (307 aa).

One can recognise a CP-type G domain in the interval 82 to 240 (GRYGERIVVA…IADTPGLREV (159 aa)). GTP contacts are provided by residues 131–134 (NKAD) and 182–190 (GPSGVGKSS). Residues Cys-264, Cys-269, His-271, and Cys-277 each contribute to the Zn(2+) site.

The protein belongs to the TRAFAC class YlqF/YawG GTPase family. RsgA subfamily. As to quaternary structure, monomer. Associates with 30S ribosomal subunit, binds 16S rRNA. It depends on Zn(2+) as a cofactor.

The protein resides in the cytoplasm. Functionally, one of several proteins that assist in the late maturation steps of the functional core of the 30S ribosomal subunit. Helps release RbfA from mature subunits. May play a role in the assembly of ribosomal proteins into the subunit. Circularly permuted GTPase that catalyzes slow GTP hydrolysis, GTPase activity is stimulated by the 30S ribosomal subunit. This chain is Small ribosomal subunit biogenesis GTPase RsgA, found in Gemmatimonas aurantiaca (strain DSM 14586 / JCM 11422 / NBRC 100505 / T-27).